A 325-amino-acid polypeptide reads, in one-letter code: ADP-L-glycero-D-manno-heptose-6-epimerase (325 aa).

NADP(+) is bound by residues 10-11 (FI), 31-32 (DD), Lys38, and 75-79 (EGACS). The active-site Proton acceptor is the Tyr139. Lys143 contacts NADP(+). Residue Asn167 participates in substrate binding. NADP(+) is bound by residues Val168 and Lys176. The active-site Proton acceptor is the Lys176. Substrate contacts are provided by residues Ser178, His185, 199–202 (FEGS), Arg212, and Tyr285.

This sequence belongs to the NAD(P)-dependent epimerase/dehydratase family. HldD subfamily. Homopentamer. The cofactor is NADP(+).

The catalysed reaction is ADP-D-glycero-beta-D-manno-heptose = ADP-L-glycero-beta-D-manno-heptose. Its pathway is nucleotide-sugar biosynthesis; ADP-L-glycero-beta-D-manno-heptose biosynthesis; ADP-L-glycero-beta-D-manno-heptose from D-glycero-beta-D-manno-heptose 7-phosphate: step 4/4. Catalyzes the interconversion between ADP-D-glycero-beta-D-manno-heptose and ADP-L-glycero-beta-D-manno-heptose via an epimerization at carbon 6 of the heptose. The chain is ADP-L-glycero-D-manno-heptose-6-epimerase from Azoarcus sp. (strain BH72).